The following is a 246-amino-acid chain: Small ribosomal subunit protein uS2 (246 aa).

The protein belongs to the universal ribosomal protein uS2 family.

The polypeptide is Small ribosomal subunit protein uS2 (Burkholderia cenocepacia (strain ATCC BAA-245 / DSM 16553 / LMG 16656 / NCTC 13227 / J2315 / CF5610) (Burkholderia cepacia (strain J2315))).